The primary structure comprises 382 residues: MTISKVPTQKLPAEGEVGLVDIGSLTTESGAVIDDVCIAVQRWGELSPTRDNVVMVLHALTGDSHITGPAGPGHPTPGWWDWIAGPGAPIDTNRWCAIATNVLGGCRGSTGPSSLARDGKPWGSRFPLISIRDQVEADIAALAAMGITKVAAVVGGSMGGARALEWIIGHPDQVRAGLLLAVGVRATADQIGTQTTQIAAIKTDPNWQGGDYYETGRAPENGLTIARRFAHLTYRSEVELDTRFANNNQGNEDPATGGRYAVQSYLEHQGDKLLARFDAGSYVVLTETLNSHDVGRGRGGIGTALRGCPVPVVVGGITSDRLYPLRLQQELAEMLPGCTGLQVVDSTYGHDGFLVESEAVGKLIRQTLELADVGSKEDACSQ.

The region spanning 52-356 (NVVMVLHALT…TYGHDGFLVE (305 aa)) is the AB hydrolase-1 domain. Catalysis depends on serine 157, which acts as the Nucleophile. Arginine 227 is a substrate binding site. Residues aspartate 320 and histidine 350 contribute to the active site. Aspartate 351 serves as a coordination point for substrate.

The protein belongs to the AB hydrolase superfamily. MetX family. As to quaternary structure, homodimer.

The protein resides in the cytoplasm. It catalyses the reaction L-homoserine + acetyl-CoA = O-acetyl-L-homoserine + CoA. The protein operates within amino-acid biosynthesis; L-methionine biosynthesis via de novo pathway; O-acetyl-L-homoserine from L-homoserine: step 1/1. Its function is as follows. Transfers an acetyl group from acetyl-CoA to L-homoserine, forming acetyl-L-homoserine. This chain is Homoserine O-acetyltransferase, found in Mycobacterium leprae (strain TN).